The chain runs to 511 residues: 2'-acyl-2-O-sulfo-trehalose (hydroxy)phthioceranyltransferase PapA1 (511 aa).

The protein belongs to the PapA acyltransferase family.

The enzyme catalyses a (hydroxy)phthioceranyl-[(hydroxy)phthioceranic acid synthase] + 2'-palmitoyl/stearoyl-2-O-sulfo-alpha,alpha-trehalose = a 3'-(hydroxy)phthioceranyl-2'-palmitoyl/stearoyl-2-O-sulfo-alpha,alpha-trehalose + holo-[(hydroxy)phthioceranic acid synthase].. In terms of biological role, catalyzes the acylation of trehalose-2-sulfate-2'-palmitate (SL659) by adding the (hydroxy)phthioceranoyl group at the 3'-position to yield the diacylated intermediate 2-palmitoyl-3-(C43)-phthioceranyl-alpha, alpha'-D-trehalose-2'-sulfate (SL1278). The chain is 2'-acyl-2-O-sulfo-trehalose (hydroxy)phthioceranyltransferase PapA1 (papA1) from Mycobacterium bovis (strain BCG / Pasteur 1173P2).